The primary structure comprises 224 residues: Mammalian ependymin-related protein 1 (224 aa).

Residues 1-37 (MLTRAPRRLVQGPRETWLLGGLWVWILCGLGMAGSPG) form the signal peptide. 3 disulfide bridges follow: cysteine 42–cysteine 172, cysteine 88–cysteine 222, and cysteine 113–cysteine 210. 2 N-linked (GlcNAc...) asparagine glycosylation sites follow: asparagine 130 and asparagine 182.

Belongs to the ependymin family. As to quaternary structure, homodimer. In terms of processing, N-glycosylated; the glycan contains mannose-6-phosphate moieties. In terms of tissue distribution, detected in brain (at protein level).

Its subcellular location is the lysosome lumen. It is found in the secreted. In terms of biological role, binds anionic lipids and gangliosides at acidic pH. This chain is Mammalian ependymin-related protein 1 (Epdr1), found in Rattus norvegicus (Rat).